Consider the following 590-residue polypeptide: Phosphomethylpyrimidine synthase (590 aa).

Residues Asn-197, Met-226, Tyr-255, His-291, 311–313 (SRG), 352–355 (DGLR), and Glu-391 contribute to the substrate site. His-395 is a Zn(2+) binding site. Tyr-418 lines the substrate pocket. Residue His-459 participates in Zn(2+) binding. Cys-539, Cys-542, and Cys-547 together coordinate [4Fe-4S] cluster.

It belongs to the ThiC family. Requires [4Fe-4S] cluster as cofactor.

It catalyses the reaction 5-amino-1-(5-phospho-beta-D-ribosyl)imidazole + S-adenosyl-L-methionine = 4-amino-2-methyl-5-(phosphooxymethyl)pyrimidine + CO + 5'-deoxyadenosine + formate + L-methionine + 3 H(+). It functions in the pathway cofactor biosynthesis; thiamine diphosphate biosynthesis. Catalyzes the synthesis of the hydroxymethylpyrimidine phosphate (HMP-P) moiety of thiamine from aminoimidazole ribotide (AIR) in a radical S-adenosyl-L-methionine (SAM)-dependent reaction. The sequence is that of Phosphomethylpyrimidine synthase from Bacillus velezensis (strain DSM 23117 / BGSC 10A6 / LMG 26770 / FZB42) (Bacillus amyloliquefaciens subsp. plantarum).